We begin with the raw amino-acid sequence, 228 residues long: Octanoyltransferase (228 aa).

In terms of domain architecture, BPL/LPL catalytic spans 30–214 (KKIGDTLLLL…YFGKVFGKSL (185 aa)). Substrate-binding positions include 75–82 (RGGDVTYH), 144–146 (AIG), and 157–159 (GFA). Cysteine 175 functions as the Acyl-thioester intermediate in the catalytic mechanism.

The protein belongs to the LipB family.

The protein localises to the cytoplasm. The catalysed reaction is octanoyl-[ACP] + L-lysyl-[protein] = N(6)-octanoyl-L-lysyl-[protein] + holo-[ACP] + H(+). It functions in the pathway protein modification; protein lipoylation via endogenous pathway; protein N(6)-(lipoyl)lysine from octanoyl-[acyl-carrier-protein]: step 1/2. In terms of biological role, catalyzes the transfer of endogenously produced octanoic acid from octanoyl-acyl-carrier-protein onto the lipoyl domains of lipoate-dependent enzymes. Lipoyl-ACP can also act as a substrate although octanoyl-ACP is likely to be the physiological substrate. In Caldicellulosiruptor bescii (strain ATCC BAA-1888 / DSM 6725 / KCTC 15123 / Z-1320) (Anaerocellum thermophilum), this protein is Octanoyltransferase.